A 319-amino-acid chain; its full sequence is MTYARIQGVGSYIPQQILSNADLEKMVNTTDEWIMQRVGVRERHVIANSPDNTTTMAVDAAKRAIEMAGIDPAVIDMIIVGTATAEYYFPSTACLVQKHLNLREDIPAFDINAACAGFVYALSIADQYIRNEGAKHILVIGVDSLTKVVDWKDRSTCILFGDGAGAVILQAHKEPGILNTILHANGDYSDLITAKSGVWERESVPHLHMYGKEVFKLAVTKLGEIVDEIIEKSGLKQSGIDWLIPHQANLRIIEATAKRLGLPRERVILTIEQHGNTSAASIPLALDAAVRAGKIKRGDTLLLEAFGAGLAWGAALLKL.

Active-site residues include cysteine 115 and histidine 246. The segment at 247 to 251 is ACP-binding; it reads QANLR. Asparagine 276 is a catalytic residue.

The protein belongs to the thiolase-like superfamily. FabH family. As to quaternary structure, homodimer.

Its subcellular location is the cytoplasm. The enzyme catalyses malonyl-[ACP] + acetyl-CoA + H(+) = 3-oxobutanoyl-[ACP] + CO2 + CoA. It participates in lipid metabolism; fatty acid biosynthesis. Functionally, catalyzes the condensation reaction of fatty acid synthesis by the addition to an acyl acceptor of two carbons from malonyl-ACP. Catalyzes the first condensation reaction which initiates fatty acid synthesis and may therefore play a role in governing the total rate of fatty acid production. Possesses both acetoacetyl-ACP synthase and acetyl transacylase activities. Its substrate specificity determines the biosynthesis of branched-chain and/or straight-chain of fatty acids. This chain is Beta-ketoacyl-[acyl-carrier-protein] synthase III, found in Coxiella burnetii (strain RSA 331 / Henzerling II).